The following is a 249-amino-acid chain: tRNA pseudouridine synthase A (249 aa).

Asp-52 functions as the Nucleophile in the catalytic mechanism. Tyr-110 contacts substrate.

Belongs to the tRNA pseudouridine synthase TruA family. Homodimer.

The enzyme catalyses uridine(38/39/40) in tRNA = pseudouridine(38/39/40) in tRNA. Its function is as follows. Formation of pseudouridine at positions 38, 39 and 40 in the anticodon stem and loop of transfer RNAs. This chain is tRNA pseudouridine synthase A, found in Syntrophomonas wolfei subsp. wolfei (strain DSM 2245B / Goettingen).